A 120-amino-acid polypeptide reads, in one-letter code: Large ribosomal subunit protein eL34x (120 aa).

The disordered stretch occupies residues 31–50 (TYQTTNKRASGPKCPVTGKR).

Belongs to the eukaryotic ribosomal protein eL34 family.

This is Large ribosomal subunit protein eL34x (RPL34C) from Arabidopsis thaliana (Mouse-ear cress).